The primary structure comprises 621 residues: Exonuclease 3'-5' domain-containing protein 2 (621 aa).

At 1–4 (MSRQ) the chain is on the mitochondrial intermembrane side. A helical transmembrane segment spans residues 5 to 25 (NLVALTVTTLLGVAVGGFVLW). Over 26 to 621 (KGIQRRRRSK…FGEDLPIQLS (596 aa)) the chain is Cytoplasmic. The interval 34–68 (SKTSPVTQQPQQKVLGSRELPPPEDDQLHSSAPRS) is disordered. Residues 36 to 47 (TSPVTQQPQQKV) are compositionally biased toward polar residues. 3 residues coordinate a divalent metal cation: Asp108, Glu110, and Asp246. Residues 155 to 247 (ILADGTILKV…DQVIYAARDA (93 aa)) form the 3'-5' exonuclease domain. Residues 299 to 343 (RLGEEVNGEATESQQKPRNKKSKMDGMVPGNHQGRDPRKHKRKPL) are disordered.

This sequence belongs to the EXD2 family. In terms of assembly, homodimer. Interacts with RBBP8, MRE11 and BRCA1. It depends on Mg(2+) as a cofactor. Mn(2+) is required as a cofactor.

It is found in the mitochondrion outer membrane. Its subcellular location is the mitochondrion matrix. It localises to the nucleus. The protein localises to the chromosome. The catalysed reaction is Exonucleolytic cleavage in the 3'- to 5'-direction to yield nucleoside 5'-phosphates.. Functionally, exonuclease that has both 3'-5' exoribonuclease and exodeoxyribonuclease activities, depending on the divalent metal cation used as cofactor. In presence of Mg(2+), only shows 3'-5' exoribonuclease activity, while it shows both exoribonuclease and exodeoxyribonuclease activities in presence of Mn(2+). Acts as an exoribonuclease in mitochondrion, possibly by regulating ATP production and mitochondrial translation. Also involved in the response to DNA damage. Acts as 3'-5' exodeoxyribonuclease for double-strand breaks resection and efficient homologous recombination. Plays a key role in controlling the initial steps of chromosomal break repair, it is recruited to chromatin in a damage-dependent manner and functionally interacts with the MRN complex to accelerate resection through its 3'-5' exonuclease activity, which efficiently processes double-stranded DNA substrates containing nicks. Also involved in response to replicative stress: recruited to stalled forks and is required to stabilize and restart stalled replication forks by restraining excessive fork regression, thereby suppressing their degradation. The sequence is that of Exonuclease 3'-5' domain-containing protein 2 from Homo sapiens (Human).